A 47-amino-acid chain; its full sequence is PhoP/PhoQ regulator MgrB (47 aa).

Residues 6 to 26 traverse the membrane as a helical segment; the sequence is WVVLVVVVLACLLLWAQVFNM.

This sequence belongs to the MgrB family. As to quaternary structure, may form homooligomers. Probably interacts with the periplasmic domain of PhoQ.

It is found in the cell inner membrane. Functionally, phoP-regulated transcription is redox-sensitive, being activated when the periplasm becomes more reducing. MgrB acts between DsbA/DsbB and PhoP/PhoQ in this pathway. Represses PhoP/PhoQ signaling, possibly by binding to the periplasmic domain of PhoQ, altering its activity and that of downstream effector PhoP. The chain is PhoP/PhoQ regulator MgrB from Escherichia coli O157:H7.